A 361-amino-acid polypeptide reads, in one-letter code: Phospho-N-acetylmuramoyl-pentapeptide-transferase (361 aa).

The next 10 helical transmembrane spans lie at 25-45 (TGGA…WIID), 72-92 (TPTM…LLWA), 95-115 (LNPY…VGFY), 135-155 (LLIE…LGRA), 169-189 (VMLN…VGAG), 200-220 (GLAI…SYLA), 240-260 (LAVL…FNAP), 264-284 (IFMG…IAVA), 289-309 (IVLA…IVQV), and 338-358 (QIVI…LSTL).

Belongs to the glycosyltransferase 4 family. MraY subfamily. The cofactor is Mg(2+).

The protein resides in the cell inner membrane. It catalyses the reaction UDP-N-acetyl-alpha-D-muramoyl-L-alanyl-gamma-D-glutamyl-meso-2,6-diaminopimeloyl-D-alanyl-D-alanine + di-trans,octa-cis-undecaprenyl phosphate = di-trans,octa-cis-undecaprenyl diphospho-N-acetyl-alpha-D-muramoyl-L-alanyl-D-glutamyl-meso-2,6-diaminopimeloyl-D-alanyl-D-alanine + UMP. The protein operates within cell wall biogenesis; peptidoglycan biosynthesis. In terms of biological role, catalyzes the initial step of the lipid cycle reactions in the biosynthesis of the cell wall peptidoglycan: transfers peptidoglycan precursor phospho-MurNAc-pentapeptide from UDP-MurNAc-pentapeptide onto the lipid carrier undecaprenyl phosphate, yielding undecaprenyl-pyrophosphoryl-MurNAc-pentapeptide, known as lipid I. The chain is Phospho-N-acetylmuramoyl-pentapeptide-transferase from Rhodopseudomonas palustris (strain ATCC BAA-98 / CGA009).